Reading from the N-terminus, the 194-residue chain is dTTP/UTP pyrophosphatase (194 aa).

The active-site Proton acceptor is the Asp-69.

The protein belongs to the Maf family. YhdE subfamily. Requires a divalent metal cation as cofactor.

The protein resides in the cytoplasm. The enzyme catalyses dTTP + H2O = dTMP + diphosphate + H(+). It carries out the reaction UTP + H2O = UMP + diphosphate + H(+). Its function is as follows. Nucleoside triphosphate pyrophosphatase that hydrolyzes dTTP and UTP. May have a dual role in cell division arrest and in preventing the incorporation of modified nucleotides into cellular nucleic acids. The chain is dTTP/UTP pyrophosphatase from Symbiobacterium thermophilum (strain DSM 24528 / JCM 14929 / IAM 14863 / T).